The chain runs to 323 residues: CYFIP-related Rac1 interactor A (323 aa).

Belongs to the CYRI family.

The protein localises to the membrane. In terms of biological role, may negatively regulate RAC1 signaling and RAC1-driven cytoskeletal remodeling. May regulate chemotaxis, cell migration and epithelial polarization by controlling the polarity, plasticity, duration and extent of protrusions. This is CYFIP-related Rac1 interactor A (CYRIA) from Gallus gallus (Chicken).